Reading from the N-terminus, the 212-residue chain is Placenta-specific protein 1 (212 aa).

An N-terminal signal peptide occupies residues 1–22 (MKVFKFIGLMILLTSAFSAGSG).

Belongs to the PLAC1 family. In terms of tissue distribution, expressed in placenta. Localizes primarily to differentiated syncytiotrophoblast throughout gestation as well as to a small population of villous cytotrophoblasts. Also detected in maternal blood and rapidly disappears following delivery, but is not detected in other adult or fetal tissues examined.

The protein localises to the secreted. Its function is as follows. May play a role in placental development. This is Placenta-specific protein 1 from Homo sapiens (Human).